A 529-amino-acid chain; its full sequence is Basal body-orientation factor 1 (529 aa).

Positions methionine 1 to serine 13 are enriched in basic residues. Residues methionine 1–isoleucine 22 form a disordered region. 2 coiled-coil regions span residues leucine 85–lysine 201 and valine 271–arginine 361.

The protein belongs to the BBOF1 family. In terms of assembly, interacts with MNS1 and ODF2.

The protein localises to the cytoplasm. Its subcellular location is the cytoskeleton. The protein resides in the cilium basal body. It is found in the flagellum axoneme. Its function is as follows. Plays an essential role in sperm motility and male fertility by stabilizing the sperm flagellar axonemal structure. May be required for the stability of ODF2 and MANS1 proteins. Dispensable for the assembly and function of motile cilia. This Homo sapiens (Human) protein is Basal body-orientation factor 1.